Reading from the N-terminus, the 671-residue chain is UvrABC system protein B (671 aa).

Positions 25–412 constitute a Helicase ATP-binding domain; that stretch reads EGIDAGLAHQ…AGRIVEQVVR (388 aa). 38 to 45 is an ATP binding site; it reads GVTGSGKT. Residues 91–114 carry the Beta-hairpin motif; the sequence is YYDYYQPEAYVPSSDTFIEKDASI. Residues 429–582 enclose the Helicase C-terminal domain; sequence QVDDLLSEIH…QIAFNLEHGI (154 aa). The segment at 601–625 is disordered; the sequence is PGSRSKKRKGMAKAAEESARYENEL. The span at 614 to 625 shows a compositional bias: basic and acidic residues; it reads AAEESARYENEL. The 36-residue stretch at 632–667 folds into the UVR domain; the sequence is NKRIRQLEEKMYQLARDLEFEAAAQMRDEIGKLRER.

It belongs to the UvrB family. In terms of assembly, forms a heterotetramer with UvrA during the search for lesions. Interacts with UvrC in an incision complex.

Its subcellular location is the cytoplasm. In terms of biological role, the UvrABC repair system catalyzes the recognition and processing of DNA lesions. A damage recognition complex composed of 2 UvrA and 2 UvrB subunits scans DNA for abnormalities. Upon binding of the UvrA(2)B(2) complex to a putative damaged site, the DNA wraps around one UvrB monomer. DNA wrap is dependent on ATP binding by UvrB and probably causes local melting of the DNA helix, facilitating insertion of UvrB beta-hairpin between the DNA strands. Then UvrB probes one DNA strand for the presence of a lesion. If a lesion is found the UvrA subunits dissociate and the UvrB-DNA preincision complex is formed. This complex is subsequently bound by UvrC and the second UvrB is released. If no lesion is found, the DNA wraps around the other UvrB subunit that will check the other stand for damage. This chain is UvrABC system protein B, found in Pseudomonas syringae pv. tomato (strain ATCC BAA-871 / DC3000).